The chain runs to 142 residues: Large ribosomal subunit protein uL13 (142 aa).

The protein belongs to the universal ribosomal protein uL13 family. In terms of assembly, part of the 50S ribosomal subunit.

Functionally, this protein is one of the early assembly proteins of the 50S ribosomal subunit, although it is not seen to bind rRNA by itself. It is important during the early stages of 50S assembly. This chain is Large ribosomal subunit protein uL13, found in Buchnera aphidicola subsp. Schizaphis graminum (strain Sg).